The following is an 89-amino-acid chain: MSNKEQLIEMQGKVDEVLPDSRFRVVLENGHTLIAYSGGKMRKHRIRVLAGDTVSLEMSPYDLTKGRITFRHLEPRAGGAPRRPSPHRR.

The 73-residue stretch at 1-73 folds into the S1-like domain; sequence MSNKEQLIEM…TKGRITFRHL (73 aa).

The protein belongs to the IF-1 family. As to quaternary structure, component of the 30S ribosomal translation pre-initiation complex which assembles on the 30S ribosome in the order IF-2 and IF-3, IF-1 and N-formylmethionyl-tRNA(fMet); mRNA recruitment can occur at any time during PIC assembly.

It localises to the cytoplasm. Functionally, one of the essential components for the initiation of protein synthesis. Stabilizes the binding of IF-2 and IF-3 on the 30S subunit to which N-formylmethionyl-tRNA(fMet) subsequently binds. Helps modulate mRNA selection, yielding the 30S pre-initiation complex (PIC). Upon addition of the 50S ribosomal subunit IF-1, IF-2 and IF-3 are released leaving the mature 70S translation initiation complex. The polypeptide is Translation initiation factor IF-1 1 (Acidovorax sp. (strain JS42)).